A 476-amino-acid polypeptide reads, in one-letter code: Acyl-lipid omega-13 desaturase (476 aa).

The Cytochrome b5 heme-binding domain occupies 10 to 75 (GPALPSIPHQ…HLRVLERFRV (66 aa)). H37 and H60 together coordinate heme. 2 helical membrane passes run 146-166 (PFVILHCLHVVGLIWSMKLWW) and 168-188 (GAFISAFILPYFLWVLCAAMV). A Histidine box-1 motif is present at residues 189–193 (HDGGH). The Histidine box-2 signature appears at 224 to 229 (HNILHH). 3 consecutive transmembrane segments (helical) span residues 267–287 (FFSHLIMYNFAHIGLTMISPL), 315–335 (YHSTVMLQLVTVGAFYITPFL), and 343–363 (LLLTLLPTFMMSVAFMVIAQV). The Histidine box-3 motif lies at 410 to 414 (QSLHH).

It belongs to the fatty acid desaturase type 1 family.

The protein resides in the membrane. It carries out the reaction a (9Z,12Z)-octadecadienoyl-containing glycerolipid + 2 Fe(II)-[cytochrome b5] + O2 + 2 H(+) = a (5Z,9Z,12Z)-octadecatrienoyl-containing glycerolipid + 2 Fe(III)-[cytochrome b5] + 2 H2O. The catalysed reaction is (9Z,12Z,15Z)-octadecatrienoyl-containing glycerolipid + 2 Fe(II)-[cytochrome b5] + O2 + 2 H(+) = a (5Z,9Z,12Z,15Z)-octadecatetraenoyl-containing glycerolipid + 2 Fe(III)-[cytochrome b5] + 2 H2O. Its pathway is lipid metabolism; polyunsaturated fatty acid biosynthesis. In terms of biological role, front-end desaturase having a omega-13 desaturase activity for omega-9 unsaturated C18/C20 fatty acids. Strong substrate preferences for linoleic acid and alpha-linolenic acid for the production of pinolenic and coniferonic acids respectively. No desaturase activity for dihomo gamma-linolenic acid and eicosatertraenoic acid. The chain is Acyl-lipid omega-13 desaturase from Chlamydomonas reinhardtii (Chlamydomonas smithii).